Reading from the N-terminus, the 312-residue chain is MGLRDSEALKPLAVLIAGPTASGKSALALDLAERTDGVIINADSMQVYGDLRILTARPSPEEEMRVPHRLYGHVDGAADYSVARWIADAAAAMATARAEGRLPIVIGGTGLYFRALTRGLAPIPEIPEEVRQRVRRMAEDEVTVVLHARLATRDPEAAVRLQPQDRQRILRALEVFEATGQPLSQWQRATHRPVLEEASAVRFVLEVERETLRGRIDRRFETMMEAGALAEVERLAARELPADRTILKAHGAPALTRYLRGEMSRADAIAEGQNDTRRYAKRQVTWFRHQMPDWMRGTPDTALDQLTGTLRL.

18 to 25 (GPTASGKS) contributes to the ATP binding site. Residue 20-25 (TASGKS) participates in substrate binding. Interaction with substrate tRNA stretches follow at residues 43–46 (DSMQ) and 167–171 (QRILR).

The protein belongs to the IPP transferase family. As to quaternary structure, monomer. It depends on Mg(2+) as a cofactor.

It carries out the reaction adenosine(37) in tRNA + dimethylallyl diphosphate = N(6)-dimethylallyladenosine(37) in tRNA + diphosphate. In terms of biological role, catalyzes the transfer of a dimethylallyl group onto the adenine at position 37 in tRNAs that read codons beginning with uridine, leading to the formation of N6-(dimethylallyl)adenosine (i(6)A). This Azorhizobium caulinodans (strain ATCC 43989 / DSM 5975 / JCM 20966 / LMG 6465 / NBRC 14845 / NCIMB 13405 / ORS 571) protein is tRNA dimethylallyltransferase.